A 431-amino-acid polypeptide reads, in one-letter code: Homeobox protein knotted-1-like 3 (431 aa).

Positions 15 to 47 (NHFTDQHQPPPPQPPPPPPQQQQHFQEAPPPNW) are disordered. The span at 22–34 (QPPPPQPPPPPPQ) shows a compositional bias: pro residues. The ELK domain maps to 322–342 (ELKHELKQGYKEKIVDIREEI). The segment at residues 343-406 (LRKRRAGKLP…NQRKRNWHSN (64 aa)) is a DNA-binding region (homeobox; TALE-type). The segment at 402–431 (NWHSNPSSSTVLKNKRKSNAGDNSGRERFA) is disordered. Positions 404–413 (HSNPSSSTVL) are enriched in polar residues.

The protein belongs to the TALE/KNOX homeobox family. As to quaternary structure, may form heterodimeric complex with the TALE/BELL proteins. Interacts with OFP1, OFP2, OFP4, OFP12 and OFP14. Interacts with KNATM-B.

It localises to the nucleus. The chain is Homeobox protein knotted-1-like 3 (KNAT3) from Arabidopsis thaliana (Mouse-ear cress).